A 458-amino-acid chain; its full sequence is Divalent metal cation transporter MntH (458 aa).

Helical transmembrane passes span 38–58 (GFWKTLAAYTGPGILVAVGYM), 76–96 (SLLSVILISSLIAMLLQAMAA), 119–139 (GGFLWVITELAIMATDIAEII), 151–171 (MPLIVGIIITTADVLILLLLM), 180–200 (AVVATLVLVILLVFAYEVILA), 223–243 (MLYLSLGIVGATVMPHDLFLG), 275–295 (LTMAFIVNSLLLILGAALFFG), 315–335 (IVGAIASPMLSMLFAVALLAS), 370–390 (LMSVTPVLIFAIYYHGNEAKI), 393–413 (LLTFSQVFLSIALPFAVIPLV), and 437–457 (FISGVLIILNLYLIAQTLGFV).

The protein belongs to the NRAMP family.

Its subcellular location is the cell membrane. In terms of biological role, h(+)-stimulated, divalent metal cation uptake system. This chain is Divalent metal cation transporter MntH, found in Lacticaseibacillus casei (strain BL23) (Lactobacillus casei).